The primary structure comprises 151 residues: Superoxide dismutase [Cu-Zn] 4 (151 aa).

Cu cation is bound by residues histidine 45, histidine 47, and histidine 62. The cysteines at positions 56 and 145 are disulfide-linked. Zn(2+) is bound by residues histidine 62, histidine 70, histidine 79, and aspartate 82. Histidine 120 provides a ligand contact to Cu cation.

Belongs to the Cu-Zn superoxide dismutase family. As to quaternary structure, homodimer. Requires Cu cation as cofactor. The cofactor is Zn(2+).

Its subcellular location is the cytoplasm. The catalysed reaction is 2 superoxide + 2 H(+) = H2O2 + O2. Its function is as follows. Destroys radicals which are normally produced within the cells and which are toxic to biological systems. Protects spores from cellular damage caused by UV LIGHT. The chain is Superoxide dismutase [Cu-Zn] 4 (sodD) from Dictyostelium discoideum (Social amoeba).